Consider the following 309-residue polypeptide: Testis-expressed protein 264 homolog (309 aa).

The Lumenal segment spans residues Met1 to Asp3. Residues Leu4 to Phe24 form a helical; Signal-anchor for type III membrane protein membrane-spanning segment. Over Ala25 to Glu309 the chain is Cytoplasmic. Positions Pro193–Glu309 are disordered. Residues Ala208–Ser225 are compositionally biased toward low complexity. Phosphoserine is present on residues Ser238 and Ser243. A compositionally biased stretch (basic and acidic residues) spans Gly250–Tyr262. The span at Ser263–Phe272 shows a compositional bias: low complexity. The LIR motif signature appears at Phe272 to Leu275.

As to quaternary structure, interacts (via the LIR motif) with ATG8 family proteins MAP1LC3A, MAP1LC3B, GABARAP and GABARAPL1. Interacts with VCP/p97; bridging VCP/p97 to covalent DNA-protein cross-links (DPCs). Interacts with TOP1 (when sumoylated).

The protein resides in the endoplasmic reticulum membrane. Its subcellular location is the cytoplasmic vesicle. It localises to the autophagosome. It is found in the cytoplasm. The protein localises to the cytosol. The protein resides in the nucleus. Its subcellular location is the chromosome. In terms of biological role, major reticulophagy (also called ER-phagy) receptor that acts independently of other candidate reticulophagy receptors to remodel subdomains of the endoplasmic reticulum into autophagosomes upon nutrient stress, which then fuse with lysosomes for endoplasmic reticulum turnover. The ATG8-containing isolation membrane (IM) cradles a tubular segment of TEX264-positive ER near a three-way junction, allowing the formation of a synapse of 2 juxtaposed membranes with trans interaction between the TEX264 and ATG8 proteins. Expansion of the IM would extend the capture of ER, possibly through a 'zipper-like' process involving continued trans TEX264-ATG8 interactions, until poorly understood mechanisms lead to the fission of relevant membranes and, ultimately, autophagosomal membrane closure. Also involved in the repair of covalent DNA-protein cross-links (DPCs) during DNA synthesis: acts by bridging VCP/p97 to covalent DNA-protein cross-links (DPCs) and initiating resolution of DPCs by SPRTN. This is Testis-expressed protein 264 homolog from Mus musculus (Mouse).